A 213-amino-acid chain; its full sequence is Adenylate kinase (213 aa).

10–15 (GSGKGT) lines the ATP pocket. Residues 30 to 59 (STGDMLRTTVNKESVLGKNIQAIIKLGNLV) are NMP. AMP contacts are provided by residues threonine 31, arginine 36, 57-59 (NLV), 85-88 (GFPR), and glutamine 92. The segment at 122 to 159 (GRMVHEPSGRIYHVTFNPPKQKGKDDITGENLIIRQDD) is LID. ATP contacts are provided by residues arginine 123 and 132-133 (IY). The AMP site is built by arginine 156 and arginine 167. Cysteine 199 contributes to the ATP binding site.

It belongs to the adenylate kinase family. Monomer.

Its subcellular location is the cytoplasm. The enzyme catalyses AMP + ATP = 2 ADP. It participates in purine metabolism; AMP biosynthesis via salvage pathway; AMP from ADP: step 1/1. Functionally, catalyzes the reversible transfer of the terminal phosphate group between ATP and AMP. Plays an important role in cellular energy homeostasis and in adenine nucleotide metabolism. In Baumannia cicadellinicola subsp. Homalodisca coagulata, this protein is Adenylate kinase.